The primary structure comprises 336 residues: MAVATAAAVLAALGGALWLAARRFVGPRVQRLRRGGDPGLMHGKTVLITGANSGLGRATAAELLRLGARVIMGCRDRARAEEAAGQLRRELRQAAECGPEPGVSGVGELIVRELDLASLRSVRAFCQEMLQEEPRLDVLINNAGIFQCPYMKTEDGFEMQFGVNHLGHFLLTNLLLGLLKSSAPSRIVVVSSKLYKYGDINFDDLNSEQSYNKSFCYSRSKLANILFTRELARRLEGTNVTVNVLHPGIVRTNLGRHIHIPLLVKPLFNLVSWAFFKTPVEGAQTSIYLASSPEVEGVSGRYFGDCKEEELLPKAMDESVARKLWDISEVMVGLLK.

T5 bears the Phosphothreonine mark. 50–56 (GANSGLG) provides a ligand contact to NADP(+). Position 192 (S192) interacts with substrate. The active-site Proton acceptor is the Y217.

Belongs to the short-chain dehydrogenases/reductases (SDR) family. In terms of tissue distribution, widely expressed.

It catalyses the reaction all-trans-retinol + NADP(+) = all-trans-retinal + NADPH + H(+). The enzyme catalyses 9-cis-retinol + NADP(+) = 9-cis-retinal + NADPH + H(+). It carries out the reaction 11-cis-retinol + NADP(+) = 11-cis-retinal + NADPH + H(+). It functions in the pathway cofactor metabolism; retinol metabolism. Functionally, retinol dehydrogenase with a clear preference for NADP. Displays high activity towards 9-cis, 11-cis and all-trans-retinol. Shows a very weak activity towards 13-cis-retinol. Has no activity towards steroid. This Homo sapiens (Human) protein is Retinol dehydrogenase 14 (RDH14).